The following is a 103-amino-acid chain: Large ribosomal subunit protein bL21 (103 aa).

This sequence belongs to the bacterial ribosomal protein bL21 family. In terms of assembly, part of the 50S ribosomal subunit. Contacts protein L20.

This protein binds to 23S rRNA in the presence of protein L20. In Klebsiella pneumoniae (strain 342), this protein is Large ribosomal subunit protein bL21.